A 205-amino-acid polypeptide reads, in one-letter code: Guanylate kinase (205 aa).

In terms of domain architecture, Guanylate kinase-like spans 3–183 (GFVLLISGPS…SYEALRAILI (181 aa)). 10-17 (GPSGAGKS) lines the ATP pocket.

This sequence belongs to the guanylate kinase family.

It is found in the cytoplasm. The catalysed reaction is GMP + ATP = GDP + ADP. Functionally, essential for recycling GMP and indirectly, cGMP. The protein is Guanylate kinase of Campylobacter jejuni (strain RM1221).